The primary structure comprises 443 residues: C4-dicarboxylate transport protein (443 aa).

The next 9 helical transmembrane spans lie at 10 to 30 (SLYF…HFYP), 46 to 66 (LIKM…IAGM), 78 to 98 (YALL…LIVV), 143 to 163 (IVGA…VIFG), 199 to 219 (PIGA…GSLV), 224 to 244 (LMIC…GGIC), 291 to 311 (VVGL…SIYL), 332 to 352 (ITLL…TGSG), and 354 to 374 (IVLA…LALI).

It belongs to the dicarboxylate/amino acid:cation symporter (DAACS) (TC 2.A.23) family.

It localises to the cell inner membrane. Functionally, responsible for the transport of dicarboxylates such as succinate, fumarate, and malate from the periplasm across the membrane. The chain is C4-dicarboxylate transport protein from Pseudomonas fluorescens (strain SBW25).